The primary structure comprises 317 residues: Large ribosomal subunit protein uL10 (317 aa).

Residues 286 to 317 (AGAGAAAEKKEEAKKEESESEEDDDMGFGLFD) are disordered. The segment covering 292-302 (AEKKEEAKKEE) has biased composition (basic and acidic residues).

The protein belongs to the universal ribosomal protein uL10 family. In terms of assembly, P0 forms a pentameric complex by interaction with dimers of P1 and P2. Post-translationally, phosphorylated.

Functionally, ribosomal protein P0 is the functional equivalent of E.coli protein L10. This is Large ribosomal subunit protein uL10 (RpLP0) from Ceratitis capitata (Mediterranean fruit fly).